A 408-amino-acid chain; its full sequence is Phosphoglycerate kinase (408 aa).

Substrate-binding positions include 24–26 (DLN), Arg-39, 62–65 (HLGR), Arg-121, and Arg-161. Residues Lys-211, Gly-307, Glu-338, and 364–367 (GGDS) contribute to the ATP site.

The protein belongs to the phosphoglycerate kinase family. As to quaternary structure, monomer.

The protein resides in the cytoplasm. It catalyses the reaction (2R)-3-phosphoglycerate + ATP = (2R)-3-phospho-glyceroyl phosphate + ADP. Its pathway is carbohydrate degradation; glycolysis; pyruvate from D-glyceraldehyde 3-phosphate: step 2/5. This Arthrobacter sp. (strain FB24) protein is Phosphoglycerate kinase.